Reading from the N-terminus, the 47-residue chain is Large ribosomal subunit protein bL32c (47 aa).

It belongs to the bacterial ribosomal protein bL32 family.

Its subcellular location is the plastid. The protein is Large ribosomal subunit protein bL32c (rpl32) of Prototheca wickerhamii.